Reading from the N-terminus, the 223-residue chain is Serum amyloid P-component (223 aa).

An N-terminal signal peptide occupies residues 1–19 (MNKPLLWISVLTSLLEAFA). The 200-residue stretch at 24–223 (SGKVFVFPRE…YVIIKPLVWV (200 aa)) folds into the Pentraxin (PTX) domain. The N-linked (GlcNAc...) asparagine glycan is linked to Asn51. Cysteines 55 and 114 form a disulfide. Asp77, Asn78, Glu155, Gln156, Asp157, and Gln167 together coordinate Ca(2+).

Belongs to the pentraxin family. Homopentamer. Pentraxin (or pentaxin) have a discoid arrangement of 5 non-covalently bound subunits. The cofactor is Ca(2+). Post-translationally, N-glycosylated with a complex biantennary oligosaccharide chain with a sialic acid at the end (disialo-SAP). Monosialo-SAP as well as asioalo-SAP are also detected. In terms of tissue distribution, found in serum and urine.

It localises to the secreted. Its function is as follows. Can interact with DNA and histones and may scavenge nuclear material released from damaged circulating cells. May also function as a calcium-dependent lectin. The polypeptide is Serum amyloid P-component (APCS) (Homo sapiens (Human)).